The following is a 304-amino-acid chain: MLFEQIAANKRKTIFIILGFFIFVLMVGAAIGIIVWNNYLNGLVLAAVIGAFYILIMVMSSSSVVMAMNHAKEVTSKEQAPVLWDTVESMAMVAGIPMPKVYIVEDPSPNAFATGISPEKGAVAVTRGLLNKLERYELEGVIAHEISHIRNYDIRLSTIAIALVAVIAILSDIAMRMIFWGSLTGGRNNRKSDNNNSGGAQAIIYIVALIFVILAPIIATAIQFALSRNREYLADASAVELTRNPDGLIQALQKISGDSKKMEEVSASSESIYFSSPLKSKKNKPGLFDSHPPISSRIERLENM.

2 consecutive transmembrane segments (helical) span residues 14 to 34 (IFII…IGII) and 39 to 59 (YLNG…IMVM). His144 is a Zn(2+) binding site. The active site involves Glu145. His148 is a binding site for Zn(2+). 2 helical membrane passes run 159 to 179 (IAIA…RMIF) and 202 to 222 (AIIY…ATAI). Glu231 provides a ligand contact to Zn(2+).

Belongs to the peptidase M48B family. Zn(2+) serves as cofactor.

It is found in the cell membrane. In Listeria monocytogenes serovar 1/2a (strain ATCC BAA-679 / EGD-e), this protein is Protease HtpX homolog.